Consider the following 212-residue polypeptide: Probable GTP-binding protein EngB (212 aa).

An EngB-type G domain is found at 22-212; the sequence is GVSEFAFFGR…NILSLIAKRI (191 aa). Residues 30–37, 57–61, 95–98, 162–165, and 192–195 each bind GTP; these read GRSNAGKS, GMTRE, DLPG, TKAD, and ISSA. 2 residues coordinate Mg(2+): S37 and T59.

The protein belongs to the TRAFAC class TrmE-Era-EngA-EngB-Septin-like GTPase superfamily. EngB GTPase family. It depends on Mg(2+) as a cofactor.

Necessary for normal cell division and for the maintenance of normal septation. In Treponema denticola (strain ATCC 35405 / DSM 14222 / CIP 103919 / JCM 8153 / KCTC 15104), this protein is Probable GTP-binding protein EngB.